The sequence spans 38 residues: DNA binding protein ORF8 (38 aa).

The protein belongs to the microviridae J protein family.

The protein localises to the virion. The protein resides in the host cytoplasm. In terms of biological role, mediates ssDNA packaging into virion, it locates to the internal surface of the capsid, thereby displacing the internal scaffolding protein during virion formation. Additionally, protein ORF8 plays a role in viral attachment to the host cell. The sequence is that of DNA binding protein ORF8 from Spiroplasma melliferum (SpV4).